Consider the following 195-residue polypeptide: dTTP/UTP pyrophosphatase (195 aa).

Catalysis depends on Asp-77, which acts as the Proton acceptor.

The protein belongs to the Maf family. YhdE subfamily. Requires a divalent metal cation as cofactor.

It localises to the cytoplasm. The enzyme catalyses dTTP + H2O = dTMP + diphosphate + H(+). It carries out the reaction UTP + H2O = UMP + diphosphate + H(+). Its function is as follows. Nucleoside triphosphate pyrophosphatase that hydrolyzes dTTP and UTP. May have a dual role in cell division arrest and in preventing the incorporation of modified nucleotides into cellular nucleic acids. The chain is dTTP/UTP pyrophosphatase from Flavobacterium psychrophilum (strain ATCC 49511 / DSM 21280 / CIP 103535 / JIP02/86).